We begin with the raw amino-acid sequence, 168 residues long: Protein B-Myc (168 aa).

Disordered regions lie at residues Asp-26 to Glu-94 and Glu-146 to Thr-168. Residues Ser-59 and Ser-67 each carry the phosphoserine modification.

It localises to the nucleus. In terms of biological role, seems to act as an inhibitor of cellular proliferation. This chain is Protein B-Myc (Mycb), found in Rattus norvegicus (Rat).